The chain runs to 269 residues: Ribosomal RNA small subunit methyltransferase A (269 aa).

6 residues coordinate S-adenosyl-L-methionine: Asn-20, Leu-22, Gly-47, Glu-68, Asp-90, and Asn-110.

It belongs to the class I-like SAM-binding methyltransferase superfamily. rRNA adenine N(6)-methyltransferase family. RsmA subfamily.

The protein resides in the cytoplasm. It carries out the reaction adenosine(1518)/adenosine(1519) in 16S rRNA + 4 S-adenosyl-L-methionine = N(6)-dimethyladenosine(1518)/N(6)-dimethyladenosine(1519) in 16S rRNA + 4 S-adenosyl-L-homocysteine + 4 H(+). Its function is as follows. Specifically dimethylates two adjacent adenosines (A1518 and A1519) in the loop of a conserved hairpin near the 3'-end of 16S rRNA in the 30S particle. May play a critical role in biogenesis of 30S subunits. The protein is Ribosomal RNA small subunit methyltransferase A of Chlorobium phaeobacteroides (strain DSM 266 / SMG 266 / 2430).